Consider the following 278-residue polypeptide: S-formylglutathione hydrolase YeiG (278 aa).

Residues Ser145, Asp223, and His256 each act as charge relay system in the active site.

Belongs to the esterase D family.

The catalysed reaction is S-formylglutathione + H2O = formate + glutathione + H(+). Functionally, serine hydrolase involved in the detoxification of formaldehyde. Hydrolyzes S-formylglutathione to glutathione and formate. This Escherichia coli O6:K15:H31 (strain 536 / UPEC) protein is S-formylglutathione hydrolase YeiG (yeiG).